The chain runs to 120 residues: Ribonuclease P protein component (120 aa).

Belongs to the RnpA family. As to quaternary structure, consists of a catalytic RNA component (M1 or rnpB) and a protein subunit.

It catalyses the reaction Endonucleolytic cleavage of RNA, removing 5'-extranucleotides from tRNA precursor.. In terms of biological role, RNaseP catalyzes the removal of the 5'-leader sequence from pre-tRNA to produce the mature 5'-terminus. It can also cleave other RNA substrates such as 4.5S RNA. The protein component plays an auxiliary but essential role in vivo by binding to the 5'-leader sequence and broadening the substrate specificity of the ribozyme. The polypeptide is Ribonuclease P protein component (Microcystis aeruginosa (strain NIES-843 / IAM M-2473)).